The sequence spans 418 residues: MFYSYPYKALSFPIQCVWLKLNGSWPLTESSRPWRSQSLLATAYIVWAWYVIASVGITISYQTAFLLNNLSDIIITTENCCTTFMGVLNFVRLIHLRLNQRKFRQLIENFSYEIWIPNSSKNNVAAECRRRMVTFSIMTSLLACLIIMYCVLPLVEIFFGPAFDAQNKPFPYKMIFPYDAQSSWIRYVMTYIFTSYAGICVVTTLFAEDTILGFFITYTCGQFHLLHQRIAGLFAGSNAELAESIQLERLKRIVEKHNNIISFAKRLEDFFNPILLANLMISSVLICMVGFQIVTGKNMFIGDYVKFIIYISSALSQLYVLCENGDALIKQSTLTAQILYECQWEGSDRIEIQSFTPTTKRIRNQIWFMILCSQQPVRITAFKFSTLSLQSFTAILSTSISYFTLLRSVYFDDEKKLD.

At Met-1 to Ser-38 the chain is on the cytoplasmic side. Residues Leu-39–Ile-59 form a helical membrane-spanning segment. Over Ser-60–Leu-70 the chain is Extracellular. An N-linked (GlcNAc...) asparagine glycan is attached at Asn-69. The chain crosses the membrane as a helical span at residues Ser-71–Val-91. The Cytoplasmic segment spans residues Arg-92–Ser-140. A helical membrane pass occupies residues Leu-141–Pro-161. Over Ala-162 to Ser-195 the chain is Extracellular. Residues Tyr-196 to Ile-216 traverse the membrane as a helical segment. Over Thr-217–Pro-273 the chain is Cytoplasmic. The helical transmembrane segment at Ile-274–Val-294 threads the bilayer. Residues Thr-295 to Met-299 lie on the Extracellular side of the membrane. Residues Phe-300–Val-320 traverse the membrane as a helical segment. Residues Leu-321–Ser-385 lie on the Cytoplasmic side of the membrane. A helical membrane pass occupies residues Thr-386–Leu-406. Residues Arg-407–Asp-418 are Extracellular-facing.

It belongs to the insect chemoreceptor superfamily. Heteromeric odorant receptor channel (TC 1.A.69) family. Or1a subfamily. In terms of assembly, interacts with Orco. Complexes exist early in the endomembrane system in olfactory sensory neurons (OSNs), coupling these complexes to the conserved ciliary trafficking pathway. Expressed in olfactory sensory neurons in the antenna.

It is found in the cell membrane. Odorant receptor which mediates acceptance or avoidance behavior, depending on its substrates. The odorant receptor repertoire encodes a large collection of odor stimuli that vary widely in identity, intensity, and duration. May form a complex with Orco to form odorant-sensing units, providing sensitive and prolonged odorant signaling and calcium permeability. Involved in the behavioral responses to octanol, nonanol, and pentyl acetate. The sequence is that of Odorant receptor 13a (Or13a) from Drosophila melanogaster (Fruit fly).